A 1473-amino-acid polypeptide reads, in one-letter code: DNA topoisomerase 2 (1473 aa).

The disordered stretch occupies residues 1-20; the sequence is MATKLPLQNSNAANVAKAPA. A compositionally biased stretch (low complexity) spans 9–20; the sequence is NSNAANVAKAPA. ATP-binding positions include N91, N120, 148 to 150, and 161 to 168; these read SSN and GRNGYGAK. Positions 345-347 are interaction with DNA; that stretch reads NKK. 378–380 provides a ligand contact to ATP; it reads QTK. The Toprim domain occupies 455 to 569; the sequence is CTLILTEGDS…SLLQVPSFLV (115 aa). Residues E461, D538, and D540 each contribute to the Mg(2+) site. Positions 704–1163 constitute a Topo IIA-type catalytic domain; the sequence is IPSMVDGLKP…TPKSLWLSDL (460 aa). Residue Y794 is the O-(5'-phospho-DNA)-tyrosine intermediate of the active site. Residues 980–989 are interaction with DNA; it reads KLTTTIATSN. Disordered stretches follow at residues 1195–1230, 1242–1297, and 1313–1473; these read SGAA…SYSA, KPKA…EVEE, and GSAP…EDDE. Basic residues-rich tracts occupy residues 1200–1216 and 1278–1288; these read KVKR…KTTK and PKGRQGAKKKA. Over residues 1351 to 1360 the composition is skewed to low complexity; sequence KPAATKAAKP. 2 stretches are compositionally biased toward polar residues: residues 1394-1404 and 1417-1427; these read SPFNKKSSSVM and ENVAGNSSSEK. Over residues 1453–1473 the composition is skewed to acidic residues; that stretch reads SESESANDSEFDDIEDDEDDE.

This sequence belongs to the type II topoisomerase family. As to quaternary structure, homodimer. Mg(2+) serves as cofactor. It depends on Mn(2+) as a cofactor. The cofactor is Ca(2+).

It carries out the reaction ATP-dependent breakage, passage and rejoining of double-stranded DNA.. Control of topological states of DNA by transient breakage and subsequent rejoining of DNA strands. Topoisomerase II makes double-strand breaks. The chain is DNA topoisomerase 2 (TOP2) from Arabidopsis thaliana (Mouse-ear cress).